A 181-amino-acid chain; its full sequence is ATP-dependent protease subunit HslV (181 aa).

Residue Thr7 is part of the active site. Na(+)-binding residues include Ala162, Cys165, and Thr168.

This sequence belongs to the peptidase T1B family. HslV subfamily. In terms of assembly, a double ring-shaped homohexamer of HslV is capped on each side by a ring-shaped HslU homohexamer. The assembly of the HslU/HslV complex is dependent on binding of ATP.

It is found in the cytoplasm. The catalysed reaction is ATP-dependent cleavage of peptide bonds with broad specificity.. Its activity is regulated as follows. Allosterically activated by HslU binding. Functionally, protease subunit of a proteasome-like degradation complex believed to be a general protein degrading machinery. The polypeptide is ATP-dependent protease subunit HslV (Coxiella burnetii (strain Dugway 5J108-111)).